Consider the following 409-residue polypeptide: Dihydroorotase (409 aa).

Residues His57 and His59 each coordinate Zn(2+). Substrate is bound by residues 59–61 (HLR) and Asn91. 4 residues coordinate Zn(2+): Lys139, His168, His208, and Asp276. At Lys139 the chain carries N6-carboxylysine. The active site involves Asp276. Substrate is bound by residues His280 and 290 to 291 (AG).

This sequence belongs to the metallo-dependent hydrolases superfamily. DHOase family. Class I DHOase subfamily. It depends on Zn(2+) as a cofactor.

It carries out the reaction (S)-dihydroorotate + H2O = N-carbamoyl-L-aspartate + H(+). Its pathway is pyrimidine metabolism; UMP biosynthesis via de novo pathway; (S)-dihydroorotate from bicarbonate: step 3/3. Functionally, catalyzes the reversible cyclization of carbamoyl aspartate to dihydroorotate. This Thermococcus kodakarensis (strain ATCC BAA-918 / JCM 12380 / KOD1) (Pyrococcus kodakaraensis (strain KOD1)) protein is Dihydroorotase.